The chain runs to 370 residues: 3-isopropylmalate dehydrogenase (370 aa).

77-90 (GPKWDGVPYEHRPE) contributes to the NAD(+) binding site. The substrate site is built by Arg97, Arg107, Arg135, and Asp226. 3 residues coordinate Mg(2+): Asp226, Asp250, and Asp254. 290 to 302 (GSAPDIAGKSIAN) contacts NAD(+).

This sequence belongs to the isocitrate and isopropylmalate dehydrogenases family. LeuB type 1 subfamily. As to quaternary structure, homodimer. The cofactor is Mg(2+). Requires Mn(2+) as cofactor.

It is found in the cytoplasm. The enzyme catalyses (2R,3S)-3-isopropylmalate + NAD(+) = 4-methyl-2-oxopentanoate + CO2 + NADH. The protein operates within amino-acid biosynthesis; L-leucine biosynthesis; L-leucine from 3-methyl-2-oxobutanoate: step 3/4. Its function is as follows. Catalyzes the oxidation of 3-carboxy-2-hydroxy-4-methylpentanoate (3-isopropylmalate) to 3-carboxy-4-methyl-2-oxopentanoate. The product decarboxylates to 4-methyl-2 oxopentanoate. The protein is 3-isopropylmalate dehydrogenase (leuB) of Agrobacterium fabrum (strain C58 / ATCC 33970) (Agrobacterium tumefaciens (strain C58)).